The primary structure comprises 479 residues: Poly(A) polymerase catalytic subunit (479 aa).

Residues Asp202 and Asp204 contribute to the active site. Ca(2+) is bound by residues Asp202, Asp204, and Asp253.

The protein belongs to the poxviridae poly(A) polymerase catalytic subunit family. As to quaternary structure, heterodimer of a large (catalytic) subunit and a small (regulatory) subunit.

The enzyme catalyses RNA(n) + ATP = RNA(n)-3'-adenine ribonucleotide + diphosphate. Polymerase that creates the 3'-poly(A) tail of mRNA's. The protein is Poly(A) polymerase catalytic subunit (OPG063) of Cynomys gunnisoni (Gunnison's prairie dog).